Consider the following 702-residue polypeptide: Neurochondrin (702 aa).

The protein belongs to the neurochondrin family.

Its subcellular location is the cytoplasm. The protein localises to the cytosol. It localises to the cell projection. The protein resides in the dendrite. It is found in the postsynapse. Functionally, probably involved in signal transduction, in the nervous system. Required for the spatial learning process. May also be involved in neurite outgrowth. This is Neurochondrin (NCDN) from Gallus gallus (Chicken).